The chain runs to 260 residues: Kallikrein-8 (260 aa).

The N-terminal stretch at 1–28 (MGRPRPRAAKTWMFLLLLGGAWAGHSRA) is a signal peptide. Positions 29-32 (QEDK) are excised as a propeptide. A Peptidase S1 domain is found at 33-257 (VLGGHECQPH…YLDWIKKIIG (225 aa)). 6 cysteine pairs are disulfide-bonded: Cys-39–Cys-173, Cys-58–Cys-74, Cys-145–Cys-246, Cys-152–Cys-218, Cys-184–Cys-198, and Cys-208–Cys-233. The active-site Charge relay system is the His-73. The N-linked (GlcNAc...) asparagine glycan is linked to Asn-110. The Charge relay system role is filled by Asp-120. Ser-212 serves as the catalytic Charge relay system.

Belongs to the peptidase S1 family. Kallikrein subfamily. Interacts with SPINK9. Isoform 1 is predominantly expressed in the pancreas. Isoform 2 is expressed in adult brain and hippocampus. Isoform 1 and isoform 2 are found in fetal brain and placenta. Detected in salivary gland, uterus, thymus, breast, testis and kidney but not in spleen, liver, lung or normal ovarian tissue. Displays an 11.5-fold increase in Alzheimer disease hippocampus compared to controls and is overexpressed in some ovarian carcinomas. Expressed at low levels in normal skin while high levels are found in psoriasis vulgaris, seborrheic keratosis, lichen planus and squamous cell carcinoma skin samples. Expressed in the keratinocytes.

Its subcellular location is the secreted. It is found in the cytoplasm. It catalyses the reaction Cleavage of amide substrates following the basic amino acids Arg or Lys at the P1 position, with a preference for Arg over Lys.. Inhibited by a range of serine protease inhibitors including antipain, aprotinin, leupeptin, benzamidine and soybean trypsin inhibitor. Its function is as follows. Serine protease which is capable of degrading a number of proteins such as casein, fibrinogen, kininogen, fibronectin and collagen type IV. Also cleaves L1CAM in response to increased neural activity. Induces neurite outgrowth and fasciculation of cultured hippocampal neurons. Plays a role in the formation and maturation of orphan and small synaptic boutons in the Schaffer-collateral pathway, regulates Schaffer-collateral long-term potentiation in the hippocampus and is required for memory acquisition and synaptic plasticity. Involved in skin desquamation and keratinocyte proliferation. Plays a role in the secondary phase of pathogenesis following spinal cord injury. In Homo sapiens (Human), this protein is Kallikrein-8 (KLK8).